The following is a 1483-amino-acid chain: Chromosome partition protein MukB (1483 aa).

Glycine 34–serine 41 contributes to the ATP binding site. Coiled coils occupy residues leucine 326–glutamine 418, leucine 444–glutamine 480, arginine 509–alanine 601, arginine 780–leucine 804, glutamate 837–glutamate 923, glutamate 977–alanine 1115, and valine 1209–valine 1265. The tract at residues proline 666–cysteine 783 is flexible hinge.

This sequence belongs to the SMC family. MukB subfamily. Homodimerization via its hinge domain. Binds to DNA via its C-terminal region. Interacts, and probably forms a ternary complex, with MukE and MukF via its C-terminal region. The complex formation is stimulated by calcium or magnesium. Interacts with tubulin-related protein FtsZ.

It is found in the cytoplasm. The protein resides in the nucleoid. In terms of biological role, plays a central role in chromosome condensation, segregation and cell cycle progression. Functions as a homodimer, which is essential for chromosome partition. Involved in negative DNA supercoiling in vivo, and by this means organize and compact chromosomes. May achieve or facilitate chromosome segregation by condensation DNA from both sides of a centrally located replisome during cell division. This chain is Chromosome partition protein MukB, found in Shigella dysenteriae serotype 1 (strain Sd197).